The chain runs to 300 residues: Small ribosomal subunit protein uS2 (300 aa).

A disordered region spans residues 269–300 (WEADGADWAASSAAAPAESWAAEAQGAEGAKW).

The protein belongs to the universal ribosomal protein uS2 family. In terms of assembly, component of the small ribosomal subunit. Mature ribosomes consist of a small (40S) and a large (60S) subunit. The 40S subunit contains about 33 different proteins and 1 molecule of RNA (18S). The 60S subunit contains about 49 different proteins and 3 molecules of RNA (25S, 5.8S and 5S). Interacts with rps21.

It localises to the cytoplasm. Functionally, required for the assembly and/or stability of the 40S ribosomal subunit. Required for the processing of the 20S rRNA-precursor to mature 18S rRNA in a late step of the maturation of 40S ribosomal subunits. The chain is Small ribosomal subunit protein uS2 (rps0) from Aspergillus terreus (strain NIH 2624 / FGSC A1156).